A 146-amino-acid polypeptide reads, in one-letter code: Cyanate hydratase (146 aa).

Residues R87, E90, and S113 contribute to the active site.

It belongs to the cyanase family.

It carries out the reaction cyanate + hydrogencarbonate + 3 H(+) = NH4(+) + 2 CO2. Catalyzes the reaction of cyanate with bicarbonate to produce ammonia and carbon dioxide. This Pseudomonas putida (strain ATCC 700007 / DSM 6899 / JCM 31910 / BCRC 17059 / LMG 24140 / F1) protein is Cyanate hydratase.